We begin with the raw amino-acid sequence, 338 residues long: Pyridoxal 5'-phosphate synthase subunit PdxS (338 aa).

Aspartate 66 serves as a coordination point for D-ribose 5-phosphate. The active-site Schiff-base intermediate with D-ribose 5-phosphate is lysine 123. Glycine 195 provides a ligand contact to D-ribose 5-phosphate. Lysine 207 is a binding site for D-glyceraldehyde 3-phosphate. D-ribose 5-phosphate is bound by residues glycine 256 and 277–278; that span reads GS.

The protein belongs to the PdxS/SNZ family. As to quaternary structure, in the presence of PdxT, forms a dodecamer of heterodimers.

It carries out the reaction aldehydo-D-ribose 5-phosphate + D-glyceraldehyde 3-phosphate + L-glutamine = pyridoxal 5'-phosphate + L-glutamate + phosphate + 3 H2O + H(+). It functions in the pathway cofactor biosynthesis; pyridoxal 5'-phosphate biosynthesis. In terms of biological role, catalyzes the formation of pyridoxal 5'-phosphate from ribose 5-phosphate (RBP), glyceraldehyde 3-phosphate (G3P) and ammonia. The ammonia is provided by the PdxT subunit. Can also use ribulose 5-phosphate and dihydroxyacetone phosphate as substrates, resulting from enzyme-catalyzed isomerization of RBP and G3P, respectively. This is Pyridoxal 5'-phosphate synthase subunit PdxS from Saccharolobus islandicus (strain Y.N.15.51 / Yellowstone #2) (Sulfolobus islandicus).